The following is a 474-amino-acid chain: ATP synthase subunit beta 1 (474 aa).

An ATP-binding site is contributed by 157–164; it reads GGAGVGKT.

The protein belongs to the ATPase alpha/beta chains family. As to quaternary structure, F-type ATPases have 2 components, CF(1) - the catalytic core - and CF(0) - the membrane proton channel. CF(1) has five subunits: alpha(3), beta(3), gamma(1), delta(1), epsilon(1). CF(0) has three main subunits: a(1), b(2) and c(9-12). The alpha and beta chains form an alternating ring which encloses part of the gamma chain. CF(1) is attached to CF(0) by a central stalk formed by the gamma and epsilon chains, while a peripheral stalk is formed by the delta and b chains.

The protein localises to the cell inner membrane. It catalyses the reaction ATP + H2O + 4 H(+)(in) = ADP + phosphate + 5 H(+)(out). Its function is as follows. Produces ATP from ADP in the presence of a proton gradient across the membrane. The catalytic sites are hosted primarily by the beta subunits. In Albidiferax ferrireducens (strain ATCC BAA-621 / DSM 15236 / T118) (Rhodoferax ferrireducens), this protein is ATP synthase subunit beta 1.